We begin with the raw amino-acid sequence, 634 residues long: Microtubule-associated protein 70-2 (634 aa).

The disordered stretch occupies residues 1–57 (MSDVSGDGDLSATVTEHEVTPQPPVSSATYPSLTVSASYKESSGGKSSSKRRPIRPS). Residues 25 to 35 (VSSATYPSLTV) show a composition bias toward polar residues. Residues 36 to 47 (SASYKESSGGKS) are compositionally biased toward low complexity. Residues 74–392 (DPVKVELNRL…LRLKVLEETL (319 aa)) are a coiled coil. The segment at 258–494 (ILDRMHRQKV…YSFNKATDDS (237 aa)) is required for targeting to microtubules. Polar residues-rich tracts occupy residues 393–417 (RGTS…SRRQ) and 443–464 (MRHS…TSKS). Disordered stretches follow at residues 393–526 (RGTS…SVPG) and 594–634 (VEKD…KSTQ). Residues 532–601 (LQKEVVSLRK…MRVEKDQDAR (70 aa)) adopt a coiled-coil conformation. The segment covering 605-616 (FSNSKSPSNTAQ) has biased composition (polar residues).

It belongs to the MAP70 family.

The protein localises to the cytoplasm. The protein resides in the cytoskeleton. Its function is as follows. Plant-specific protein that interact with microtubules. This Arabidopsis thaliana (Mouse-ear cress) protein is Microtubule-associated protein 70-2 (MAP70.2).